A 305-amino-acid chain; its full sequence is Hepatitis A virus cellular receptor 1 homolog (305 aa).

The first 21 residues, 1–21 (MNQIQVFISGLILLLPGAVDS), serve as a signal peptide directing secretion. The region spanning 22-122 (YVEVKGVVGH…PGWFNDQKVT (101 aa)) is the Ig-like V-type domain. Over 22 to 237 (YVEVKGVVGH…GKPQKNPTKG (216 aa)) the chain is Extracellular. 3 disulfides stabilise this stretch: cysteine 37–cysteine 108, cysteine 49–cysteine 60, and cysteine 55–cysteine 107. Residues 129 to 185 (PEIPTRPPTRPTTTRPTATGRPTTISTRSTHVPTSIRVSTSTPPTSTHTWTHKPEPT) form a disordered region. Composition is skewed to low complexity over residues 139 to 152 (PTTTRPTATGRPTT) and 161 to 177 (PTSIRVSTSTPPTSTHT). Asparagine 208 carries N-linked (GlcNAc...) asparagine glycosylation. A helical membrane pass occupies residues 238 to 258 (FYVGICIAALLLLLLVSTVAI). Topologically, residues 259-305 (TRYILMKRKSASLSVVAFRVSKIEALQNAAVVHSRAEDNIYIVEDRP) are cytoplasmic.

It belongs to the immunoglobulin superfamily. TIM family. As to quaternary structure, interacts with STAM. Interacts with SELPLG. Expressed by stimulated T-cells. Expressed during primary antigen stimulation. Expressed at higher levels on B rather than T-cells, both constitutively and after activation.

It localises to the cell membrane. Phosphatidylserine receptor that plays an important functional role in regulatory B-cells homeostasis including generation, expansion and suppressor functions. As P-selectin/SELPLG ligand, plays a specialized role in activated but not naive T-cell trafficking during inflammatory responses. Controls thereby T-cell accumulation in the inflamed central nervous system (CNS) and the induction of autoimmune disease. Also regulates expression of various anti-inflammatory cytokines and co-inhibitory ligands including IL10. Acts as a regulator of T-cell proliferation. May play a role in kidney injury and repair. The sequence is that of Hepatitis A virus cellular receptor 1 homolog (Havcr1) from Mus musculus (Mouse).